Here is a 218-residue protein sequence, read N- to C-terminus: MSQNEPKIPQATAKRLPLYYRFIQSLHASGKQRVSSAELSEAVKVDSATIRRDFSYFGALGKKGYGYNVQYLLDFFRKTLNQDEITNVALVGVGHLGTAFVNYNFLKNNNTHIVVGFDADETKVGTTMSGVPIHHVDEMEQIMKQNKIDVAILTVPSAYAQSVADDLVRFGIKGILNFTPARLTVPDTVRVHHIDLSIELQSLIYFMQHYPTAEGVHQ.

The H-T-H motif DNA-binding region spans L18 to F57. G92–G97 lines the NAD(+) pocket.

This sequence belongs to the transcriptional regulatory Rex family. As to quaternary structure, homodimer.

It localises to the cytoplasm. Its function is as follows. Modulates transcription in response to changes in cellular NADH/NAD(+) redox state. This chain is Redox-sensing transcriptional repressor Rex, found in Exiguobacterium sp. (strain ATCC BAA-1283 / AT1b).